Reading from the N-terminus, the 424-residue chain is Arogenate dehydratase 3, chloroplastic (424 aa).

A chloroplast-targeting transit peptide spans M1–H24. Over residues E57–S71 the composition is skewed to low complexity. The segment at E57 to V77 is disordered. The Prephenate dehydratase domain maps to R122–R299. The 92-residue stretch at S313–P404 folds into the ACT domain.

As to quaternary structure, may interact with GPA1. As to expression, expressed in roots, leaves, stems, flowers and siliques.

It is found in the plastid. It localises to the chloroplast stroma. The catalysed reaction is L-arogenate + H(+) = L-phenylalanine + CO2 + H2O. Its pathway is amino-acid biosynthesis; L-phenylalanine biosynthesis; L-phenylalanine from L-arogenate: step 1/1. Functionally, converts the prephenate produced from the shikimate-chorismate pathway into phenylalanine. Together with GCR1 and GPA1, required for blue light-mediated synthesis of phenylpyruvate and subsequently of phenylalanine (Phe), in etiolated seedlings. The sequence is that of Arogenate dehydratase 3, chloroplastic from Arabidopsis thaliana (Mouse-ear cress).